Reading from the N-terminus, the 559-residue chain is 2-isopropylmalate synthase (559 aa).

One can recognise a Pyruvate carboxyltransferase domain in the interval P33 to D307. Residues D42, H246, H248, and N282 each coordinate Mg(2+). The interval A439–A559 is regulatory domain.

Belongs to the alpha-IPM synthase/homocitrate synthase family. LeuA type 2 subfamily. In terms of assembly, homodimer. Mg(2+) is required as a cofactor.

The protein localises to the cytoplasm. The catalysed reaction is 3-methyl-2-oxobutanoate + acetyl-CoA + H2O = (2S)-2-isopropylmalate + CoA + H(+). It participates in amino-acid biosynthesis; L-leucine biosynthesis; L-leucine from 3-methyl-2-oxobutanoate: step 1/4. Catalyzes the condensation of the acetyl group of acetyl-CoA with 3-methyl-2-oxobutanoate (2-ketoisovalerate) to form 3-carboxy-3-hydroxy-4-methylpentanoate (2-isopropylmalate). In Pseudomonas fluorescens (strain ATCC BAA-477 / NRRL B-23932 / Pf-5), this protein is 2-isopropylmalate synthase.